We begin with the raw amino-acid sequence, 349 residues long: Transcription initiation factor TFIID subunit 7 (349 aa).

The [KR]-[STA]-K motif signature appears at 3–5 (KSK). Residues 105-126 (PPVEEPVASTDPKASKKKDKDK) form a disordered region. Residues Ser-171, Ser-200, Ser-201, and Ser-213 each carry the phosphoserine modification. The tract at residues 186 to 212 (EDETKEAENQGLDISSPGMSGHRQGHD) is disordered. Residues 227 to 247 (SSSSEDEDETQHQDEEDINII) form a disordered region. Acidic residues predominate over residues 230–247 (SEDEDETQHQDEEDINII). Positions 244–349 (INIIDTEEDL…QEELESLLEK (106 aa)) form a coiled coil. At Ser-264 the chain carries Phosphoserine. The tract at residues 328-349 (KEDREKEQLSSLQEELESLLEK) is disordered.

Belongs to the TAF7 family. In terms of assembly, component of the TFIID basal transcription factor complex, composed of TATA-box-binding protein TBP, and a number of TBP-associated factors (TAFs), including TAF1, TAF2, TAF3, TAF4, TAF5, TAF6, TAF7, TAF8, TAF9, TAF10, TAF11, TAF12 and TAF13. Part of a TFIID-containing RNA polymerase II pre-initiation complex that is composed of TBP and at least GTF2A1, GTF2A2, GTF2E1, GTF2E2, GTF2F1, GTF2H2, GTF2H3, GTF2H4, GTF2H5, GTF2B, TCEA1, ERCC2, ERCC3, TAF1, TAF2, TAF3, TAF4, TAF5, TAF6, TAF7, TAF8, TAF9, TAF10, TAF11, TAF12 and TAF13. Interacts with TAF1; the interaction is direct. Interacts with TAF1, TAF5, TAF11, TAF12, and TAF13, but not with TAF10 or TBP. Component of some MLL1/MLL complex, at least composed of the core components KMT2A/MLL1, ASH2L, HCFC1/HCF1, WDR5 and RBBP5, as well as the facultative components BACC1, CHD8, E2F6, HSP70, INO80C, KANSL1, LAS1L, MAX, MCRS1, MGA, MYST1/MOF, PELP1, PHF20, PRP31, RING2, RUVB1/TIP49A, RUVB2/TIP49B, SENP3, TAF1, TAF4, TAF6, TAF7, TAF9 and TEX10. Interacts with CIITA and TAF1 and inhibits their acetyltransferase activity, and behaving as a repressor of CIITA- and TAF1-regulated promoters. In terms of processing, phosphorylated by CIITA. Phosphorylation at Ser-264 by TAF1 in early G1 phase disrupts binding to TAF1. Ubiquitinated by TRIM26; leading to proteasomal degradation. As to expression, ubiquitous.

It localises to the nucleus. The TFIID basal transcription factor complex plays a major role in the initiation of RNA polymerase II (Pol II)-dependent transcription. TFIID recognizes and binds promoters with or without a TATA box via its subunit TBP, a TATA-box-binding protein, and promotes assembly of the pre-initiation complex (PIC). The TFIID complex consists of TBP and TBP-associated factors (TAFs), including TAF1, TAF2, TAF3, TAF4, TAF5, TAF6, TAF7, TAF8, TAF9, TAF10, TAF11, TAF12 and TAF13. TAF7 forms a promoter DNA binding subcomplex of TFIID, together with TAF1 and TAF2. Part of a TFIID complex containing TAF10 (TFIID alpha) and a TFIID complex lacking TAF10 (TFIID beta). The protein is Transcription initiation factor TFIID subunit 7 (TAF7) of Homo sapiens (Human).